The following is a 347-amino-acid chain: O-methyltransferase aunE (347 aa).

W166 contributes to the S-adenosyl-L-methionine binding site. The Proton acceptor role is filled by H265.

This sequence belongs to the class I-like SAM-binding methyltransferase superfamily. Cation-independent O-methyltransferase family.

Its pathway is secondary metabolite biosynthesis. Functionally, O-methyltransferase; part of the gene cluster that mediates the biosynthesis of aurasperone B, a dimeric gamma-naphthopyrone. The first step in the biosynthesis of aurasperone B is the production of gamma-naphthopyrone precursor YWA1 by the non-reducing polyketide synthase albA, via condensation of one acetyl-CoA starter unit with 6 malonyl-CoA units. YWA1 is then methylated by aunE at position C-6 to yield foncesin which is further methylated at position C-8 by aunD to produce fonsecin B. A key enzyme in the biosynthetic pathway is the cytochrome P450 monooxygenase aunB which catalyzes the oxidative dimerization of fonsecin B to aurasperone B. AunB also catalyzes the oxidative dimerization of rubrofusarin B into aurasperone A. The protein is O-methyltransferase aunE of Aspergillus niger (strain ATCC 1015 / CBS 113.46 / FGSC A1144 / LSHB Ac4 / NCTC 3858a / NRRL 328 / USDA 3528.7).